The following is a 91-amino-acid chain: UPF0250 protein BB0170 (91 aa).

The protein belongs to the UPF0250 family.

The chain is UPF0250 protein BB0170 from Bordetella bronchiseptica (strain ATCC BAA-588 / NCTC 13252 / RB50) (Alcaligenes bronchisepticus).